The primary structure comprises 529 residues: E3 ubiquitin-protein ligase arih1 (529 aa).

Disordered stretches follow at residues Met1–Leu30 and Gly49–Glu68. A compositionally biased stretch (gly residues) spans Cys51–Gly64. A UBA-like region spans residues Thr77–Asn125. Residues Gln154 to Asn365 are TRIAD supradomain. Residues Cys158, Cys161, Cys175, His177, Cys180, Cys183, Cys203, Cys208, Cys248, Cys253, Cys269, Cys271, Cys276, Cys279, His284, Cys289, Cys316, and Cys319 each coordinate Zn(2+). An RING-type 1 zinc finger spans residues Cys158–Cys208. An IBR-type zinc finger spans residues Leu228 to Cys289. An RING-type 2; atypical zinc finger spans residues Cys316–Cys347. Cys329 is a catalytic residue. The Zn(2+) site is built by Cys334, Cys339, Cys344, Cys347, His354, and Cys361. An ariadne domain region spans residues Arg380–Asp529.

It belongs to the RBR family. Ariadne subfamily. In terms of assembly, interacts (via the first RING-type zinc finger) with ube2l3. Associates with cullin-RING ubiquitin ligase (CRL) complexes containing neddylated cullin.

The protein localises to the cytoplasm. The protein resides in the nucleus. It catalyses the reaction [E2 ubiquitin-conjugating enzyme]-S-ubiquitinyl-L-cysteine + [acceptor protein]-L-lysine = [E2 ubiquitin-conjugating enzyme]-L-cysteine + [acceptor protein]-N(6)-ubiquitinyl-L-lysine.. It functions in the pathway protein modification; protein ubiquitination. Autoinhibited by the ariadne domain, which masks the second RING-type zinc finger that contains the active site and inhibits the E3 activity. Inhibition is relieved upon binding to neddylated cullin-RING ubiquitin ligase complexes, which activate the E3 ligase activity of ARIH1. Its function is as follows. E3 ubiquitin-protein ligase, which catalyzes ubiquitination of target proteins together with ubiquitin-conjugating enzyme E2 ube2l3. Acts as an atypical E3 ubiquitin-protein ligase by working together with cullin-RING ubiquitin ligase (CRL) complexes and initiating ubiquitination of CRL substrates: associates with CRL complexes and specifically mediates addition of the first ubiquitin on CRLs targets. The initial ubiquitin is then elongated. E3 ubiquitin-protein ligase activity is activated upon binding to neddylated cullin-RING ubiquitin ligase complexes. In Xenopus tropicalis (Western clawed frog), this protein is E3 ubiquitin-protein ligase arih1 (arih1).